We begin with the raw amino-acid sequence, 474 residues long: Dihydrolipoyl dehydrogenase (474 aa).

FAD-binding positions include 36-45, K54, and G117; that span reads ERYNTLGGVC. An intrachain disulfide couples C45 to C50. NAD(+) is bound by residues 182 to 186 and E205; that span reads GGGII. Residue K220 is modified to N6-acetyllysine. NAD(+) is bound by residues V238 and 270-273; that span reads AIGR. The FAD site is built by D313 and A321. The active-site Proton acceptor is the H445.

Belongs to the class-I pyridine nucleotide-disulfide oxidoreductase family. In terms of assembly, homodimer. FAD serves as cofactor.

The protein localises to the cytoplasm. It carries out the reaction N(6)-[(R)-dihydrolipoyl]-L-lysyl-[protein] + NAD(+) = N(6)-[(R)-lipoyl]-L-lysyl-[protein] + NADH + H(+). Its function is as follows. Lipoamide dehydrogenase is a component of the glycine cleavage system as well as of the alpha-ketoacid dehydrogenase complexes. This chain is Dihydrolipoyl dehydrogenase (lpdA), found in Shigella flexneri.